A 109-amino-acid polypeptide reads, in one-letter code: MKVATALSVLAVAGSALASALPSAANSEKRQSDCIGPLLCCGSLTTPLDPLVDPILELVGIDAAAIVGSVGLLCHAYDDTCTSEPQCCTEANLLGGTLGLGCGPLEHGH.

A signal peptide spans 1–20 (MKVATALSVLAVAGSALASA). 4 disulfides stabilise this stretch: Cys34–Cys87, Cys40–Cys81, Cys41–Cys74, and Cys88–Cys102.

This sequence belongs to the fungal hydrophobin family. In terms of assembly, self-assembles to form functional amyloid fibrils called rodlets. Self-assembly into fibrillar rodlets occurs spontaneously at hydrophobic:hydrophilic interfaces and the rodlets further associate laterally to form amphipathic monolayers.

The protein resides in the secreted. It is found in the spore wall. Aerial growth, conidiation, and dispersal of filamentous fungi in the environment rely upon a capability of their secreting small amphipathic proteins called hydrophobins (HPBs) with low sequence identity. Class I can self-assemble into an outermost layer of rodlet bundles on aerial cell surfaces, conferring cellular hydrophobicity that supports fungal growth, development and dispersal; whereas Class II form highly ordered films at water-air interfaces through intermolecular interactions but contribute nothing to the rodlet structure. DewE is a class I hydrophobin that contributes to the hydrophobicity of the spore surface. The protein is Class I hydrophobin dewE of Emericella nidulans (strain FGSC A4 / ATCC 38163 / CBS 112.46 / NRRL 194 / M139) (Aspergillus nidulans).